We begin with the raw amino-acid sequence, 356 residues long: Homoserine O-acetyltransferase (356 aa).

Residues 50 to 335 (NVILVCHALT…DEPYGHDAFL (286 aa)) enclose the AB hydrolase-1 domain. Ser146 serves as the catalytic Nucleophile. Arg215 provides a ligand contact to substrate. Catalysis depends on residues Asp302 and His331. Asp332 is a binding site for substrate.

The protein belongs to the AB hydrolase superfamily. MetX family. As to quaternary structure, homodimer.

It is found in the cytoplasm. It carries out the reaction L-homoserine + acetyl-CoA = O-acetyl-L-homoserine + CoA. The protein operates within amino-acid biosynthesis; L-methionine biosynthesis via de novo pathway; O-acetyl-L-homoserine from L-homoserine: step 1/1. Functionally, transfers an acetyl group from acetyl-CoA to L-homoserine, forming acetyl-L-homoserine. In Chlorobaculum tepidum (strain ATCC 49652 / DSM 12025 / NBRC 103806 / TLS) (Chlorobium tepidum), this protein is Homoserine O-acetyltransferase.